Here is a 280-residue protein sequence, read N- to C-terminus: MAPITGSNFHLHLVSDSTGETLITVSRAVVAQYANVTPVEHVYPLVRSQKQLDRVLAEIEEEPGIVLFTLLEKDLVERLEAKCQEINSPSLSIIGPVMQLFQAYLGAATIGRVGAQHTLNADYFRRIDALNYTMMHDDGQHVEGLEEADVVLVGVSRTSKTPTSIYLANRGIRTANVPLVPGIAIPRQLESLRTPLVVSLHAAPERLIQVRQNRLLSIGTRAGNDTYIDRQSVADEVTYARRLSAKHDWVQLDVTRRSIEETAAAIMKLFADRQRQRQPE.

Position 154 to 161 (154 to 161 (GVSRTSKT)) interacts with ADP.

This sequence belongs to the pyruvate, phosphate/water dikinase regulatory protein family. PDRP subfamily.

It catalyses the reaction N(tele)-phospho-L-histidyl/L-threonyl-[pyruvate, phosphate dikinase] + ADP = N(tele)-phospho-L-histidyl/O-phospho-L-threonyl-[pyruvate, phosphate dikinase] + AMP + H(+). The catalysed reaction is N(tele)-phospho-L-histidyl/O-phospho-L-threonyl-[pyruvate, phosphate dikinase] + phosphate + H(+) = N(tele)-phospho-L-histidyl/L-threonyl-[pyruvate, phosphate dikinase] + diphosphate. Bifunctional serine/threonine kinase and phosphorylase involved in the regulation of the pyruvate, phosphate dikinase (PPDK) by catalyzing its phosphorylation/dephosphorylation. The sequence is that of Putative pyruvate, phosphate dikinase regulatory protein from Nitrobacter hamburgensis (strain DSM 10229 / NCIMB 13809 / X14).